Reading from the N-terminus, the 1760-residue chain is Chitin synthase csmB (1760 aa).

A compositionally biased stretch (low complexity) spans 1–17 (MSNRFSVYSSHSTGVSS). Positions 1–23 (MSNRFSVYSSHSTGVSSARPSAP) are disordered. The Myosin motor domain occupies 1 to 374 (MSNRFSVYSS…TVSITVVDIP (374 aa)). An N-linked (GlcNAc...) asparagine glycan is attached at Asn275. Positions 344–363 (LDNDPSTSGGSGPGGQWTDD) are disordered. A region of interest (actin-binding) is located at residue Pro374. 2 helical membrane passes run 731–751 (IWVGFVWALTFWIPSFALRWI) and 767–787 (LVLMLIILLFNGVVCFYIIAF). 3 N-linked (GlcNAc...) asparagine glycosylation sites follow: Asn878, Asn906, and Asn995. Residues 1029–1049 (ILLSFTVLICAVILVKFVSAL) traverse the membrane as a helical segment. A glycan (N-linked (GlcNAc...) asparagine) is linked at Asn1394. 3 helical membrane-spanning segments follow: residues 1419 to 1439 (FVVLVDLLGTVILPATCVYLG), 1452 to 1472 (FPMISIVILAGVYGLQAIIFL), and 1480 to 1500 (IGWMIIYICAYPIYNFILPLY). N-linked (GlcNAc...) asparagine glycans are attached at residues Asn1584 and Asn1652. The region spanning 1702–1758 (GPDEGAITEAIRACLAEVDLDTVTKKQVRALVEQRLQTTLMGDKRTFLDRQIDHELA) is the DEK-C domain.

The protein in the N-terminal section; belongs to the TRAFAC class myosin-kinesin ATPase superfamily. Myosin family. In the C-terminal section; belongs to the chitin synthase family. Class V subfamily.

It localises to the cell membrane. Its subcellular location is the cell septum. The protein localises to the cell tip. It carries out the reaction [(1-&gt;4)-N-acetyl-beta-D-glucosaminyl](n) + UDP-N-acetyl-alpha-D-glucosamine = [(1-&gt;4)-N-acetyl-beta-D-glucosaminyl](n+1) + UDP + H(+). Its function is as follows. Polymerizes chitin, a structural polymer of the cell wall and septum, by transferring the sugar moiety of UDP-GlcNAc to the non-reducing end of the growing chitin polymer. Plays an important role in septal growth or maintenance. Mediates colony spore formation. This chain is Chitin synthase csmB, found in Aspergillus niger (strain ATCC MYA-4892 / CBS 513.88 / FGSC A1513).